Reading from the N-terminus, the 104-residue chain is Large ribosomal subunit protein uL24 (104 aa).

It belongs to the universal ribosomal protein uL24 family. In terms of assembly, part of the 50S ribosomal subunit.

In terms of biological role, one of two assembly initiator proteins, it binds directly to the 5'-end of the 23S rRNA, where it nucleates assembly of the 50S subunit. Its function is as follows. One of the proteins that surrounds the polypeptide exit tunnel on the outside of the subunit. In Shewanella baltica (strain OS223), this protein is Large ribosomal subunit protein uL24.